Consider the following 436-residue polypeptide: Ribosome biogenesis protein WDR12 homolog (436 aa).

The ubiquitin-like (UBL) domain stretch occupies residues 13-97 (VRVRFLTKLP…ERVLELEYVK (85 aa)). 7 WD repeats span residues 109–147 (PHDD…THIL), 149–193 (GHSD…SVPK), 203–242 (GHTS…EDGD), 273–311 (GHTQ…ETWN), 313–353 (VSGK…TLAP), 359–399 (SHKS…PLAS), and 402–436 (SHKD…IEIV). The interval 240–262 (DGDTVSVKKRRTNSDSSGPEESL) is disordered.

The protein belongs to the WD repeat WDR12/YTM1 family.

It is found in the nucleus. The protein resides in the nucleolus. The protein localises to the nucleoplasm. Functionally, required for maturation of ribosomal RNAs and formation of the large ribosomal subunit. This is Ribosome biogenesis protein WDR12 homolog from Oryza sativa subsp. japonica (Rice).